The chain runs to 639 residues: MVGSKMAATASIRERQTVALKRMLNFNVPHVKNSTGEPVWKVLIYDRFGQDIISPLLSVKELRDMGITLHLLLHSDRDPIPDVPAVYFVMPTEENIDRLCQDLRNQLYESYYLNFISAISRSKLEDIANAALAASAVTQVAKVFDQYLNFITLEDDMFVLCNQNKELVSYRAINRPDITDTEMETVMDTIVDSLFCFFVTLGAVPIIRCSRGTAAEMVAVKLDKKLRENLRDARNSLFTGDPLGTGQFSFQRPLLVLVDRNIDLATPLHHTWTYQALVHDVLDFHLNRVNLEESTGVENSPAGARPKRKNKKSYDLTPVDKFWQKHKGSPFPEVAESVQQELESYRAQEDEVKRLKSIMGLEGEDEGAISMLSDNTAKLTSAVSSLPELLEKKRLIDLHTNVATAVLEHIKARKLDVYFEYEEKIMSKTTLDKSLLDVISDPDAGTPEDKMRLFLIYYISAQQAPSEVDLEQYKKALTDAGCNLSPLQYIKQWKAFAKMASTPASYGNTTTKPMGLLSRVMNTGSQFVMEGVKNLVLKQQNLPVTRILDNLMEMKSNPETDDYRYFDPKMLRSNDSSVPRNKSPFQEAIVFVVGGGNYIEYQNLVDYIKAKQGKHILYGCSEIFNATQFIKQLSQLGQK.

Phosphoserine is present on residues S34, S300, and S525.

This sequence belongs to the STXBP/unc-18/SEC1 family. Interacts with STX17. Interacts with STX5A. Interacts with the COG complex via COG4.

It is found in the cytoplasm. The protein localises to the endoplasmic reticulum membrane. Its subcellular location is the golgi apparatus. The protein resides in the golgi stack membrane. In terms of biological role, plays a role in SNARE-pin assembly and Golgi-to-ER retrograde transport via its interaction with COG4. Involved in vesicular transport between the endoplasmic reticulum and the Golgi. This is Sec1 family domain-containing protein 1 (Scfd1) from Mus musculus (Mouse).